The primary structure comprises 422 residues: MAM and fibronectin type III domain-containing protein 1 (422 aa).

The MAM domain occupies 1-75; sequence KFYYHMYGAT…VSLMEGICAG (75 aa). 3 consecutive Fibronectin type-III domains span residues 2–74, 196–286, and 291–386; these read FYYH…GICA, PGWN…QART, and PSRA…YIVT.

In terms of tissue distribution, component of the acid-insoluble and acid-soluble organic matrix of the aragonitic skeleton (at protein level).

It is found in the secreted. This is MAM and fibronectin type III domain-containing protein 1 from Acropora millepora (Staghorn coral).